We begin with the raw amino-acid sequence, 287 residues long: Iron-sulfur cluster carrier protein (287 aa).

47–54 (GKGGVGKS) is an ATP binding site.

The protein belongs to the Mrp/NBP35 ATP-binding proteins family. As to quaternary structure, homodimer.

Its function is as follows. Binds and transfers iron-sulfur (Fe-S) clusters to target apoproteins. Can hydrolyze ATP. The sequence is that of Iron-sulfur cluster carrier protein from Pseudomonas fragi.